Reading from the N-terminus, the 305-residue chain is Peroxisome biogenesis factor 2 (305 aa).

The Peroxisomal matrix segment spans residues 1 to 15 (MAAREESTQSANRVL). Residues 16–42 (RISQLDALELNKALEQLVWSQFTQCFH) form a helical membrane-spanning segment. The Cytoplasmic portion of the chain corresponds to 43–48 (GFKPGL). The chain crosses the membrane as a helical span at residues 49–74 (LARFEPEVKAFLWLFLWRFTIYSKNA). Over 75 to 98 (TVGQSVLNIQHKNDSSPNPVYQPP) the chain is Peroxisomal matrix. A helical transmembrane segment spans residues 99–125 (SKNQKLLYAVCTIGGRWLEERCYDLFR). Over 126-133 (NRHLASFG) the chain is Cytoplasmic. Residues 134–160 (KAKQCMNFVVGLLKLGELMNFLIFLQK) form a helical membrane-spanning segment. Topologically, residues 161–187 (GKFATLTERLLGIHSVFCKPQNMREVG) are peroxisomal matrix. Residues 188 to 211 (FEYMNRELLWHGFAEFLIFLLPLI) traverse the membrane as a helical segment. The Cytoplasmic portion of the chain corresponds to 212–305 (NIQKLKAKLS…GIQMSEVNAL (94 aa)). Positions 244, 247, 259, 261, 264, 267, 280, and 283 each coordinate Zn(2+). The segment at 244 to 284 (CALCGEWPTMPHTIGCEHVFCYYCVKSSFLFDIYFTCPKCG) adopts an RING-type zinc-finger fold.

The protein belongs to the pex2/pex10/pex12 family. In terms of assembly, component of the PEX2-PEX10-PEX12 retrotranslocation channel, composed of PEX2, PEX10 and PEX12. In terms of processing, forms intramolecular and intermolecular disulfide bonds in response to reactive oxygen species (ROS), promoting higher stability.

The protein resides in the peroxisome membrane. The catalysed reaction is [E2 ubiquitin-conjugating enzyme]-S-ubiquitinyl-L-cysteine + [acceptor protein]-L-cysteine = [E2 ubiquitin-conjugating enzyme]-L-cysteine + [acceptor protein]-S-ubiquitinyl-L-cysteine.. The enzyme catalyses S-ubiquitinyl-[E2 ubiquitin-conjugating enzyme]-L-cysteine + [acceptor protein]-L-lysine = [E2 ubiquitin-conjugating enzyme]-L-cysteine + N(6)-ubiquitinyl-[acceptor protein]-L-lysine.. Its pathway is protein modification; protein ubiquitination. E3 ubiquitin-protein ligase component of a retrotranslocation channel required for peroxisome organization by mediating export of the PEX5 receptor from peroxisomes to the cytosol, thereby promoting PEX5 recycling. The retrotranslocation channel is composed of PEX2, PEX10 and PEX12; each subunit contributing transmembrane segments that coassemble into an open channel that specifically allows the passage of PEX5 through the peroxisomal membrane. PEX2 also regulates peroxisome organization by acting as a E3 ubiquitin-protein ligase. PEX2 ubiquitinates PEX5 during its passage through the retrotranslocation channel: catalyzes monoubiquitination of PEX5 at 'Cys-11', a modification that acts as a signal for PEX5 extraction into the cytosol. Required for pexophagy in response to starvation by mediating ubiquitination of peroxisomal proteins, such as PEX5 and ABCD3/PMP70. Also involved in the response to reactive oxygen species (ROS) by mediating 'Lys-48'-linked polyubiquitination and subsequent degradation of PNPLA2/ATGL, thereby regulating lipolysis. This Mus musculus (Mouse) protein is Peroxisome biogenesis factor 2.